Here is a 336-residue protein sequence, read N- to C-terminus: Dihydroorotate dehydrogenase (quinone) (336 aa).

FMN contacts are provided by residues 62–66 and Thr86; that span reads AGLDK. Position 66 (Lys66) interacts with substrate. A substrate-binding site is contributed by 111–115; the sequence is NRMGF. FMN-binding residues include Asn139 and Asn172. Asn172 is a binding site for substrate. Ser175 serves as the catalytic Nucleophile. Substrate is bound at residue Asn177. Lys217 and Thr245 together coordinate FMN. Residue 246 to 247 participates in substrate binding; it reads NT. FMN-binding positions include Gly268, Gly297, and 318 to 319; that span reads YS.

The protein belongs to the dihydroorotate dehydrogenase family. Type 2 subfamily. As to quaternary structure, monomer. Requires FMN as cofactor.

The protein localises to the cell membrane. It catalyses the reaction (S)-dihydroorotate + a quinone = orotate + a quinol. Its pathway is pyrimidine metabolism; UMP biosynthesis via de novo pathway; orotate from (S)-dihydroorotate (quinone route): step 1/1. Functionally, catalyzes the conversion of dihydroorotate to orotate with quinone as electron acceptor. The sequence is that of Dihydroorotate dehydrogenase (quinone) from Salmonella arizonae (strain ATCC BAA-731 / CDC346-86 / RSK2980).